We begin with the raw amino-acid sequence, 221 residues long: UPF0502 protein PLES_16071 (221 aa).

Belongs to the UPF0502 family.

The sequence is that of UPF0502 protein PLES_16071 from Pseudomonas aeruginosa (strain LESB58).